We begin with the raw amino-acid sequence, 511 residues long: Maturase K (511 aa).

This sequence belongs to the intron maturase 2 family. MatK subfamily.

The protein localises to the plastid. The protein resides in the chloroplast. Its function is as follows. Usually encoded in the trnK tRNA gene intron. Probably assists in splicing its own and other chloroplast group II introns. The chain is Maturase K from Adesmia lanata.